A 375-amino-acid chain; its full sequence is Coproporphyrin III ferrochelatase (375 aa).

Positions 59 and 128 each coordinate Fe-coproporphyrin III. Fe(2+)-binding residues include His-191 and Glu-286.

This sequence belongs to the ferrochelatase family.

The protein localises to the cytoplasm. The catalysed reaction is Fe-coproporphyrin III + 2 H(+) = coproporphyrin III + Fe(2+). It participates in porphyrin-containing compound metabolism; protoheme biosynthesis. Functionally, involved in coproporphyrin-dependent heme b biosynthesis. Catalyzes the insertion of ferrous iron into coproporphyrin III to form Fe-coproporphyrin III. The chain is Coproporphyrin III ferrochelatase from Streptomyces griseus subsp. griseus (strain JCM 4626 / CBS 651.72 / NBRC 13350 / KCC S-0626 / ISP 5235).